Reading from the N-terminus, the 298-residue chain is Protein BZR1 homolog 1 (298 aa).

Disordered stretches follow at residues 1–25 (MTSG…RRER), 71–129 (GTTY…SPSR), 153–175 (VSSS…PKIR), and 190–217 (AVSA…ESDV). A required for DNA-binding region spans residues 10 to 91 (RTPTWKEREN…PSSAGGASVG (82 aa)). Residues 96–128 (SSTQLLSAPSSSFPSPVPSYHASPASSSFPSPS) are compositionally biased toward low complexity. Residue Ser-156 is modified to Phosphoserine. The interval 204–224 (EHPDTIPECDESDVSTVDSGR) is PEST-like.

The protein belongs to the BZR/LAT61 family. As to quaternary structure, interacts with GF14C. Interacts with PUB24. Interacts with SMOS1. In terms of processing, phosphorylated on serine and threonine residues by GSK2. Dephosphorylated during response to brassinosteroid. Post-translationally, ubiquitinated by PUB24. Ubiquitination leads to its subsequent degradation by the 26S proteasome, thus reducing sensitivity to brassinosteroid signaling.

The protein resides in the nucleus. It localises to the cytoplasm. Functionally, positive brassinosteroid-signaling protein. Mediates downstream brassinosteroid-regulated growth response and feedback inhibition of brassinosteroid (BR) biosynthetic genes. May act as transcriptional repressor by binding the brassinosteroid-response element (BREE) (5'-CGTG(T/C)G-3') in the promoter of DLT (AC Q9LWU9), another positive regulator of BR signaling. Acts as a transcriptional repressor of LIC, a negative regulator of BR signaling, by binding to the BRRE element of its promoter. BZR1 and LIC play opposite roles in BR signaling and regulation of leaf bending. In Oryza sativa subsp. japonica (Rice), this protein is Protein BZR1 homolog 1.